The following is a 972-amino-acid chain: RNA polymerase-associated protein RapA (972 aa).

The 171-residue stretch at 164–334 (EVGRRYAPRV…FARLRLLDPD (171 aa)) folds into the Helicase ATP-binding domain. ATP is bound at residue 177 to 184 (DEVGLGKT). The short motif at 280–283 (DEAH) is the DEAH box element. One can recognise a Helicase C-terminal domain in the interval 493 to 671 (RVNWLLEMLK…HEPEALENLI (179 aa)).

This sequence belongs to the SNF2/RAD54 helicase family. RapA subfamily. In terms of assembly, interacts with the RNAP. Has a higher affinity for the core RNAP than for the holoenzyme. Its ATPase activity is stimulated by binding to RNAP.

Functionally, transcription regulator that activates transcription by stimulating RNA polymerase (RNAP) recycling in case of stress conditions such as supercoiled DNA or high salt concentrations. Probably acts by releasing the RNAP, when it is trapped or immobilized on tightly supercoiled DNA. Does not activate transcription on linear DNA. Probably not involved in DNA repair. The polypeptide is RNA polymerase-associated protein RapA (Photobacterium profundum (strain SS9)).